The chain runs to 132 residues: Small ribosomal subunit protein uS8 (132 aa).

The protein belongs to the universal ribosomal protein uS8 family. Part of the 30S ribosomal subunit. Contacts proteins S5 and S12.

In terms of biological role, one of the primary rRNA binding proteins, it binds directly to 16S rRNA central domain where it helps coordinate assembly of the platform of the 30S subunit. This Lactobacillus johnsonii (strain CNCM I-12250 / La1 / NCC 533) protein is Small ribosomal subunit protein uS8.